A 546-amino-acid polypeptide reads, in one-letter code: Parathyroid hormone 2 receptor (546 aa).

The first 24 residues, 1–24 (MAWLETFTYICGWLILSSCLLVRA), serve as a signal peptide directing secretion. The Extracellular segment spans residues 27-143 (DSDGTITIEE…GKQEFFESLY (117 aa)). Residues Asn-51, Asn-106, Asn-116, and Asn-121 are each glycosylated (N-linked (GlcNAc...) asparagine). Residues 144-167 (ILYTVGYSISFGSLAVAILIIGYF) form a helical membrane-spanning segment. The Cytoplasmic portion of the chain corresponds to 168–174 (RRLHCTR). The helical transmembrane segment at 175–194 (NYIHLHLFVSFMLRAMSIFV) threads the bilayer. The Extracellular segment spans residues 195 to 235 (KDRVAQAHLGVEALQSLVMQGDLQNFIGGPSVDKSQYVGCK). The helical transmembrane segment at 236-258 (IAVVMFIYFLATNYYWILVEGLY) threads the bilayer. The Cytoplasmic portion of the chain corresponds to 259–273 (LHNLIFVSFFSDTKY). The helical transmembrane segment at 274-295 (LWGFISIGWGFPAVFVVAWAVA) threads the bilayer. Residues 296–313 (RATLADTRCWELSAGDRW) lie on the Extracellular side of the membrane. The chain crosses the membrane as a helical span at residues 314-334 (IYQAPILAAIGLNFILFLNTV). At 335–361 (RVLATKIWETNAVGHDMRKQYRKLAKS) the chain is on the cytoplasmic side. A helical membrane pass occupies residues 362-380 (TLVLVLVFGVHYIVFVCQP). At 381 to 391 (HSFSGLWWEIR) the chain is on the extracellular side. Residues 392–414 (MHCELFFNSFQGFFVSIVYCYCN) traverse the membrane as a helical segment. At 415–546 (GEVQAEVKKM…EGCKGETHPI (132 aa)) the chain is on the cytoplasmic side. The segment at 497–546 (SEQDCQTHSPPEETKEGHRRQGDDSPVMESSRPVAFTLDTEGCKGETHPI) is disordered. Composition is skewed to basic and acidic residues over residues 506-519 (PPEE…RQGD) and 537-546 (EGCKGETHPI).

The protein belongs to the G-protein coupled receptor 2 family. In terms of assembly, binds to TIPF39/TIP39.

Its subcellular location is the cell membrane. In terms of biological role, this is a specific receptor for parathyroid hormone. The activity of this receptor is mediated by G proteins which activate adenylyl cyclase. PTH2R may be responsible for PTH effects in a number of physiological systems. It may play a significant role in pancreatic function. PTH2R presence in neurons indicates that it may function as a neurotransmitter receptor. This is Parathyroid hormone 2 receptor (Pth2r) from Mus musculus (Mouse).